The chain runs to 607 residues: Fatty acid amide hydrolase (607 aa).

Residues K205 and S281 each act as charge relay system in the active site. 302–305 (GGGS) serves as a coordination point for substrate. Catalysis depends on S305, which acts as the Acyl-ester intermediate.

This sequence belongs to the amidase family. Forms homodimers. In terms of tissue distribution, expressed in roots, leaves and flowers. Expressed in seedlings, flowers, roots, siliques, seeds and leaves.

Its subcellular location is the endoplasmic reticulum membrane. The protein localises to the cell membrane. The catalysed reaction is N-(5Z,8Z,11Z,14Z-eicosatetraenoyl)-ethanolamine + H2O = ethanolamine + (5Z,8Z,11Z,14Z)-eicosatetraenoate. It catalyses the reaction N-(9Z,12Z-octadecadienoyl)-ethanolamine + H2O = ethanolamine + (9Z,12Z)-octadecadienoate. It carries out the reaction N-hexadecanoylethanolamine + H2O = ethanolamine + hexadecanoate. The enzyme catalyses N-tetradecanoylethanolamine + H2O = tetradecanoate + ethanolamine. The catalysed reaction is N-dodecanoylethanolamine + H2O = dodecanoate + ethanolamine. With respect to regulation, inhibited by methyl arachidonyl fluorophosphonate (MAFP). Functionally, catalyzes the hydrolysis of bioactive endogenous fatty acid amides to their corresponding acids. The hydrolysis of endogenous amidated lipids terminates their participation as lipid mediators in various signaling systems. Converts a wide range of N-acylethanolamines (NAEs) to their corresponding free fatty acids and ethanolamine. Can use oleamide as substrate, but not indole-3-acetamide, 1-naphtalene-acetamide, nicotinic acid amide or L-asparagine. Can use 2-arachidonylglycerol as substrate. Participates in the regulation of plant growth. Hydrolyzes N-dodecanoylethanolamine, which is has a growth inhibitory effect on seedling growth. Involved in plant defense signaling. Involved in abscisic acid (ABA) signaling through mechanisms that are independent of the catalytic activity. Involved in the regulation of flowering time. Catalyzes the hydrolysis of N-acyl L-homoserine lactones (AHLs), which are a class of signaling molecules produced by bacteria for quorum sensing. Accumulation of L-homoserine appears to encourage plant growth at low concentrations by stimulating transpiration, but higher concentrations inhibit growth by stimulating ethylene production. The chain is Fatty acid amide hydrolase from Arabidopsis thaliana (Mouse-ear cress).